The primary structure comprises 154 residues: Ribosomal RNA large subunit methyltransferase H (154 aa).

S-adenosyl-L-methionine is bound by residues Leu76, Gly103, and 122–127; that span reads LSPLTL.

The protein belongs to the RNA methyltransferase RlmH family. In terms of assembly, homodimer.

The protein localises to the cytoplasm. It carries out the reaction pseudouridine(1915) in 23S rRNA + S-adenosyl-L-methionine = N(3)-methylpseudouridine(1915) in 23S rRNA + S-adenosyl-L-homocysteine + H(+). Its function is as follows. Specifically methylates the pseudouridine at position 1915 (m3Psi1915) in 23S rRNA. This is Ribosomal RNA large subunit methyltransferase H from Wolinella succinogenes (strain ATCC 29543 / DSM 1740 / CCUG 13145 / JCM 31913 / LMG 7466 / NCTC 11488 / FDC 602W) (Vibrio succinogenes).